A 251-amino-acid polypeptide reads, in one-letter code: NADH-quinone oxidoreductase subunit B (251 aa).

[4Fe-4S] cluster contacts are provided by C38, C39, C104, and C134. The tract at residues 208–251 is disordered; sequence RKGLPPGSMTDVGWIPPEARERLKAGRGAGASGSGEREEGKEGA. The segment covering 242–251 has biased composition (basic and acidic residues); that stretch reads GEREEGKEGA.

It belongs to the complex I 20 kDa subunit family. In terms of assembly, NDH-1 is composed of 14 different subunits. Subunits NuoB, C, D, E, F, and G constitute the peripheral sector of the complex. It depends on [4Fe-4S] cluster as a cofactor.

The protein localises to the cell membrane. The catalysed reaction is a quinone + NADH + 5 H(+)(in) = a quinol + NAD(+) + 4 H(+)(out). Its function is as follows. NDH-1 shuttles electrons from NADH, via FMN and iron-sulfur (Fe-S) centers, to quinones in the respiratory chain. The immediate electron acceptor for the enzyme in this species is believed to be a menaquinone. Couples the redox reaction to proton translocation (for every two electrons transferred, four hydrogen ions are translocated across the cytoplasmic membrane), and thus conserves the redox energy in a proton gradient. The polypeptide is NADH-quinone oxidoreductase subunit B (Rubrobacter xylanophilus (strain DSM 9941 / JCM 11954 / NBRC 16129 / PRD-1)).